A 90-amino-acid polypeptide reads, in one-letter code: Putative regulatory protein Dred_1699 (90 aa).

The protein belongs to the RemA family.

This is Putative regulatory protein Dred_1699 from Desulforamulus reducens (strain ATCC BAA-1160 / DSM 100696 / MI-1) (Desulfotomaculum reducens).